The following is a 447-amino-acid chain: Voltage-gated purine nucleotide uniporter SLC17A9 (447 aa).

Residues Met1–Asp26 are disordered. Helical transmembrane passes span Ile40–Val60, Gly74–Leu94, Val103–His123, Leu129–Ala149, Thr169–Leu189, Cys192–Val212, Val252–Trp272, Trp287–Ile307, Val327–Leu347, Gly380–Leu400, and Cys413–Gly433.

It belongs to the major facilitator superfamily. Sodium/anion cotransporter family. In terms of tissue distribution, in brain, specifically expressed in the medulla and is associated with chromaffin granules (at protein level). Predominantly expressed in adrenal gland, brain and thyroid.

Its subcellular location is the cytoplasmic vesicle. It is found in the secretory vesicle. It localises to the chromaffin granule membrane. The protein resides in the secretory vesicle membrane. The protein localises to the lysosome membrane. The enzyme catalyses ATP(in) = ATP(out). It catalyses the reaction ADP(in) = ADP(out). It carries out the reaction GTP(in) = GTP(out). Its activity is regulated as follows. Activity is chloride-dependent. Its function is as follows. Voltage-gated ATP nucleotide uniporter that can also transport the purine nucleotides ADP and GTP. Uses the membrane potential as the driving force to control ATP accumulation in lysosomes and secretory vesicles. By controlling ATP storage in lysosomes, regulates ATP-dependent proteins of these organelles. Also indirectly regulates the exocytosis of ATP through its import into lysosomes in astrocytes and secretory vesicles such as adrenal chromaffin granules, mucin granules and synaptic vesicles. The chain is Voltage-gated purine nucleotide uniporter SLC17A9 from Mus musculus (Mouse).